A 207-amino-acid chain; its full sequence is Small ribosomal subunit protein uS4c (207 aa).

Positions 92–150 constitute an S4 RNA-binding domain; the sequence is MRLDNILFRLGFVPTIPSARQLINHRHILVNNRIVDVPSFHCKPKDIITIGSPKTYQSI.

Belongs to the universal ribosomal protein uS4 family. Part of the 30S ribosomal subunit. Contacts protein S5. The interaction surface between S4 and S5 is involved in control of translational fidelity.

The protein resides in the plastid. The protein localises to the chloroplast. Its function is as follows. One of the primary rRNA binding proteins, it binds directly to 16S rRNA where it nucleates assembly of the body of the 30S subunit. With S5 and S12 plays an important role in translational accuracy. The sequence is that of Small ribosomal subunit protein uS4c (rps4) from Equisetum variegatum (Variegated horsetail).